A 263-amino-acid polypeptide reads, in one-letter code: Thiamine thiazole synthase (263 aa).

Residues serine 43, 62–63 (ER), glycine 70, valine 134, and 160–162 (HID) each bind NAD(+). Fe cation-binding residues include aspartate 162 and histidine 177. NAD(+) contacts are provided by serine 180 and methionine 227. Arginine 237 contributes to the glycine binding site.

This sequence belongs to the THI4 family. Homooctamer; tetramer of dimers. The cofactor is Fe(2+).

It catalyses the reaction hydrogen sulfide + glycine + NAD(+) = ADP-5-ethyl-4-methylthiazole-2-carboxylate + nicotinamide + 3 H2O + H(+). The protein operates within cofactor biosynthesis; thiamine diphosphate biosynthesis. In terms of biological role, involved in the biosynthesis of the thiazole moiety of thiamine. Catalyzes the conversion of NAD and glycine to adenosine diphosphate 5-(2-hydroxyethyl)-4-methylthiazole-2-carboxylate (ADT), an adenylated thiazole intermediate, using free sulfide as a source of sulfur. In Methanococcus aeolicus (strain ATCC BAA-1280 / DSM 17508 / OCM 812 / Nankai-3), this protein is Thiamine thiazole synthase.